A 529-amino-acid chain; its full sequence is Cytochrome P450 monooxygenase 136 (529 aa).

The helical transmembrane segment at 9–29 (SPLALAVLSIATCQLALVWWY) threads the bilayer. Heme is bound at residue C447.

It belongs to the cytochrome P450 family. Requires heme as cofactor.

It is found in the membrane. It functions in the pathway secondary metabolite biosynthesis. Functionally, cytochrome P450 monooxygenase that is able to use delta(6)-protoilludene as a substrate to produce delta(6)-protoilludene-5-ol. In Postia placenta (strain ATCC 44394 / Madison 698-R) (Brown rot fungus), this protein is Cytochrome P450 monooxygenase 136.